The sequence spans 1149 residues: FH2 domain-containing protein 1 (1149 aa).

Disordered regions lie at residues 18 to 79 (LATA…PPPG), 464 to 540 (NHDR…SRLS), 554 to 660 (ESAT…PLLP), and 681 to 1149 (SPKS…PLQK). Pro residues-rich tracts occupy residues 33 to 48 (ASPP…PPCP) and 56 to 79 (PSPP…PPPG). The FH2 domain maps to 88–483 (GYSSLGKKKR…QLQRQKEMEQ (396 aa)). Basic and acidic residues predominate over residues 464–485 (NHDREEQERKQLQRQKEMEQKR). Residues 486 to 504 (YSWSTGELGSFGRSSSEND) are compositionally biased toward polar residues. Ser501 is subject to Phosphoserine. Low complexity predominate over residues 522–532 (PRPNSPSYRPP). 2 stretches are compositionally biased toward polar residues: residues 554–575 (ESAT…SSPR) and 591–604 (SHGP…QASK). Residues Ser645 and Ser655 each carry the phosphoserine modification. Polar residues predominate over residues 681 to 693 (SPKSLEEGSQLTL). Positions 784–795 (MDSRAGGDKQEE) are enriched in basic and acidic residues. Over residues 801–822 (GSVSSGAGEAGSSQVSSNSVSS) the composition is skewed to low complexity. Basic and acidic residues predominate over residues 844–856 (PKDRPSRGKDAIA). Residues 926–947 (ETPSSTDTPLSRRSSVRGTSDT) show a composition bias toward polar residues. The segment at 960 to 1086 (EEPRLPRSSG…VKGGSEDSAS (127 aa)) is MTBD; microtubule-binding domain. Over residues 965 to 974 (PRSSGSISGR) the composition is skewed to low complexity. Polar residues-rich tracts occupy residues 1042–1052 (ARNTVASSSRS) and 1064–1074 (TGLTRTVSQRQ). A compositionally biased stretch (basic and acidic residues) spans 1123–1134 (GTTERSSLRLKD).

In terms of assembly, interacts with CEP170. In terms of tissue distribution, brain, heart and lung (at protein level).

It is found in the golgi apparatus. Its subcellular location is the cell projection. It localises to the cilium. In terms of biological role, microtubule-associated formin which regulates both actin and microtubule dynamics. Induces microtubule acetylation and stabilization and actin stress fiber formation. Regulates Golgi ribbon formation. Required for normal cilia assembly. Early in cilia assembly, may assist in the maturation and positioning of the centrosome/basal body, and once cilia assembly has initiated, may also promote cilia elongation by inhibiting disassembly. This is FH2 domain-containing protein 1 (Fhdc1) from Mus musculus (Mouse).